The following is a 222-amino-acid chain: UPF0758 protein Mpe_A2695 (222 aa).

Residues 100-222 (VFDSPQAVKD…VVSFAERGLL (123 aa)) form the MPN domain. Residues histidine 171, histidine 173, and aspartate 184 each contribute to the Zn(2+) site. Residues 171–184 (HNHPSGVAEPSRAD) carry the JAMM motif motif.

It belongs to the UPF0758 family.

The sequence is that of UPF0758 protein Mpe_A2695 from Methylibium petroleiphilum (strain ATCC BAA-1232 / LMG 22953 / PM1).